Here is a 482-residue protein sequence, read N- to C-terminus: Interferon-induced protein with tetratricopeptide repeats 5 (482 aa).

TPR repeat units lie at residues 51-84 (LALY…IQQE), 94-127 (LVTW…CKKL), 138-173 (PETD…EPDN), 181-214 (AITV…NPDN), 249-282 (PYVL…TPTS), 338-371 (AFAY…ENIT), 376-410 (HQIH…KDRS), and 435-468 (VQSL…DPEN). The tract at residues 254–260 (YAAKFYR) is interaction with the 5'-triphosphate group of PPP-RNA.

This sequence belongs to the IFIT family. As to quaternary structure, monomer. Interacts with MAP3K7 and the components of the IKK core complex CHUK, IKBKB and IKBKG; the interaction synergizes the recruitment of IKK to MAP3K7 and enhances IKK phosphorylation.

Its subcellular location is the cell projection. The protein localises to the ruffle membrane. Its function is as follows. Interferon-induced RNA-binding protein involved in the human innate immune response. Has a broad and adaptable RNA structure recognition important for RNA recognition specificity in antiviral defense. Binds precursor and processed tRNAs as well as poly-U-tailed tRNA fragments. Specifically binds single-stranded RNA bearing a 5'-triphosphate group (PPP-RNA), thereby acting as a sensor of viral single-stranded RNAs. Single-stranded PPP-RNAs, which lack 2'-O-methylation of the 5' cap and bear a 5'-triphosphate group instead, are specific from viruses, providing a molecular signature to distinguish between self and non-self mRNAs by the host during viral infection. Directly binds PPP-RNA in a non-sequence-specific manner. Also recognizes and selectively binds AT-rich dsDNA. Additionally, as a mediator in innate immunity, positively regulates IKK-NFKB signaling by sinergizing the recruitment of IKK to MAP3K7. The protein is Interferon-induced protein with tetratricopeptide repeats 5 (IFIT5) of Homo sapiens (Human).